Reading from the N-terminus, the 231-residue chain is NADH-ubiquinone oxidoreductase chain 4 (231 aa).

Transmembrane regions (helical) follow at residues Pro-1–Ile-21, Leu-34–Leu-54, Ile-63–Gly-85, Ala-89–Tyr-111, Ile-118–Leu-138, and Leu-156–Ser-176.

The protein belongs to the complex I subunit 4 family.

Its subcellular location is the mitochondrion membrane. It catalyses the reaction a ubiquinone + NADH + 5 H(+)(in) = a ubiquinol + NAD(+) + 4 H(+)(out). Core subunit of the mitochondrial membrane respiratory chain NADH dehydrogenase (Complex I) that is believed to belong to the minimal assembly required for catalysis. Complex I functions in the transfer of electrons from NADH to the respiratory chain. The immediate electron acceptor for the enzyme is believed to be ubiquinone. The sequence is that of NADH-ubiquinone oxidoreductase chain 4 (MT-ND4) from Ovophis okinavensis (Ryukyu Island pit viper).